Here is a 339-residue protein sequence, read N- to C-terminus: Glycerol-3-phosphate dehydrogenase [NAD(P)+] (339 aa).

NADPH contacts are provided by serine 13, tryptophan 14, and lysine 108. 3 residues coordinate sn-glycerol 3-phosphate: lysine 108, glycine 139, and serine 141. Residue alanine 143 participates in NADPH binding. The sn-glycerol 3-phosphate site is built by lysine 194, aspartate 247, serine 257, arginine 258, and asparagine 259. Lysine 194 acts as the Proton acceptor in catalysis. Arginine 258 serves as a coordination point for NADPH. Residues valine 282 and glutamate 284 each coordinate NADPH.

Belongs to the NAD-dependent glycerol-3-phosphate dehydrogenase family.

Its subcellular location is the cytoplasm. The catalysed reaction is sn-glycerol 3-phosphate + NAD(+) = dihydroxyacetone phosphate + NADH + H(+). The enzyme catalyses sn-glycerol 3-phosphate + NADP(+) = dihydroxyacetone phosphate + NADPH + H(+). The protein operates within membrane lipid metabolism; glycerophospholipid metabolism. Functionally, catalyzes the reduction of the glycolytic intermediate dihydroxyacetone phosphate (DHAP) to sn-glycerol 3-phosphate (G3P), the key precursor for phospholipid synthesis. In Streptococcus equi subsp. equi (strain 4047), this protein is Glycerol-3-phosphate dehydrogenase [NAD(P)+].